The chain runs to 320 residues: Ferrochelatase (320 aa).

Fe cation contacts are provided by His194 and Glu275.

The protein belongs to the ferrochelatase family. In terms of assembly, monomer.

The protein localises to the cytoplasm. It catalyses the reaction heme b + 2 H(+) = protoporphyrin IX + Fe(2+). It functions in the pathway porphyrin-containing compound metabolism; protoheme biosynthesis; protoheme from protoporphyrin-IX: step 1/1. Functionally, catalyzes the ferrous insertion into protoporphyrin IX. This chain is Ferrochelatase, found in Shigella boydii serotype 18 (strain CDC 3083-94 / BS512).